Consider the following 241-residue polypeptide: uncharacterized protein (241 aa).

The protein resides in the cytoplasm. The protein localises to the nucleus. This is an uncharacterized protein from Schizosaccharomyces pombe (strain 972 / ATCC 24843) (Fission yeast).